The sequence spans 361 residues: Queuine tRNA-ribosyltransferase (361 aa).

The active-site Proton acceptor is Asp-92. Residues 92 to 96 (DSGGF), Asp-146, Gln-189, and Gly-216 each bind substrate. The RNA binding stretch occupies residues 247–253 (GVGKPVD). Residue Asp-266 is the Nucleophile of the active site. An RNA binding; important for wobble base 34 recognition region spans residues 271–275 (TRSGR). The Zn(2+) site is built by Cys-304, Cys-306, Cys-309, and His-335.

It belongs to the queuine tRNA-ribosyltransferase family. In terms of assembly, homodimer. Within each dimer, one monomer is responsible for RNA recognition and catalysis, while the other monomer binds to the replacement base PreQ1. Zn(2+) serves as cofactor.

It carries out the reaction 7-aminomethyl-7-carbaguanine + guanosine(34) in tRNA = 7-aminomethyl-7-carbaguanosine(34) in tRNA + guanine. It participates in tRNA modification; tRNA-queuosine biosynthesis. Its function is as follows. Catalyzes the base-exchange of a guanine (G) residue with the queuine precursor 7-aminomethyl-7-deazaguanine (PreQ1) at position 34 (anticodon wobble position) in tRNAs with GU(N) anticodons (tRNA-Asp, -Asn, -His and -Tyr). Catalysis occurs through a double-displacement mechanism. The nucleophile active site attacks the C1' of nucleotide 34 to detach the guanine base from the RNA, forming a covalent enzyme-RNA intermediate. The proton acceptor active site deprotonates the incoming PreQ1, allowing a nucleophilic attack on the C1' of the ribose to form the product. After dissociation, two additional enzymatic reactions on the tRNA convert PreQ1 to queuine (Q), resulting in the hypermodified nucleoside queuosine (7-(((4,5-cis-dihydroxy-2-cyclopenten-1-yl)amino)methyl)-7-deazaguanosine). This is Queuine tRNA-ribosyltransferase from Rickettsia africae (strain ESF-5).